We begin with the raw amino-acid sequence, 1228 residues long: Apical endosomal glycoprotein (1228 aa).

An N-terminal signal peptide occupies residues 1-21 (MCLPSHLLSTWVLFMAAQSLG). Residues 23-1159 (TWLPNHCRSP…GEVAAPVSVP (1137 aa)) lie on the Extracellular side of the membrane. An LDL-receptor class A 1; truncated domain is found at 28–49 (HCRSPIKAVCNFVCDCGDCSDE). In terms of domain architecture, MAM 1 spans 65 to 223 (FTCNFEQDSC…DDVEFRDCGL (159 aa)). An N-linked (GlcNAc...) asparagine glycan is attached at asparagine 204. Positions 229–267 (RCPLGHHHCQNKACVEPHQLCDGEDNCGDRSDEDPLICS) constitute an LDL-receptor class A 2 domain. 3 disulfides stabilise this stretch: cysteine 230-cysteine 242, cysteine 237-cysteine 255, and cysteine 249-cysteine 266. Residues 270–426 (MATDFETGLG…DLIMSSHCML (157 aa)) enclose the MAM 2 domain. N-linked (GlcNAc...) asparagine glycosylation is found at asparagine 290 and asparagine 340. Residues 457–492 (TCEPGHLSCGDLCVPPEQLCDFQKHCAEGEDEHKCG) enclose the LDL-receptor class A 3 domain. 3 disulfide bridges follow: cysteine 458/cysteine 469, cysteine 465/cysteine 482, and cysteine 476/cysteine 491. 4 consecutive MAM domains span residues 492–649 (GTTD…DCNP), 659–815 (LSCN…PCWA), 817–975 (KSCS…PCPQ), and 977–1144 (GSCD…QCKQ). A glycan (N-linked (GlcNAc...) asparagine) is linked at asparagine 641. An N-linked (GlcNAc...) asparagine glycan is attached at asparagine 841. A helical membrane pass occupies residues 1160-1180 (VAVGGALLFFMFLVLMGLGGW). Residues 1181–1228 (HWLQKQHCPGQRSTDAAASGFANILFNADHVTLPESITSNPQSPPDLA) lie on the Cytoplasmic side of the membrane.

Its subcellular location is the membrane. Probably involved in the sorting and selective transport of receptors and ligands across polarized epithelia. This is Apical endosomal glycoprotein from Mus musculus (Mouse).